Consider the following 540-residue polypeptide: GMP synthase [glutamine-hydrolyzing] (540 aa).

Residues L26–T216 enclose the Glutamine amidotransferase type-1 domain. C103 serves as the catalytic Nucleophile. Residues H190 and E192 contribute to the active site. A GMPS ATP-PPase domain is found at W217–R415. S244–S250 is an ATP binding site.

As to quaternary structure, homodimer.

It carries out the reaction XMP + L-glutamine + ATP + H2O = GMP + L-glutamate + AMP + diphosphate + 2 H(+). It functions in the pathway purine metabolism; GMP biosynthesis; GMP from XMP (L-Gln route): step 1/1. Its function is as follows. Catalyzes the synthesis of GMP from XMP. This Nostoc punctiforme (strain ATCC 29133 / PCC 73102) protein is GMP synthase [glutamine-hydrolyzing].